The chain runs to 763 residues: Xaa-Pro dipeptidyl-peptidase (763 aa).

Catalysis depends on charge relay system residues S348, D468, and H498.

The protein belongs to the peptidase S15 family. Homodimer.

It is found in the cytoplasm. It catalyses the reaction Hydrolyzes Xaa-Pro-|- bonds to release unblocked, N-terminal dipeptides from substrates including Ala-Pro-|-p-nitroanilide and (sequentially) Tyr-Pro-|-Phe-Pro-|-Gly-Pro-|-Ile.. Removes N-terminal dipeptides sequentially from polypeptides having unsubstituted N-termini provided that the penultimate residue is proline. This chain is Xaa-Pro dipeptidyl-peptidase, found in Lactococcus lactis subsp. cremoris (strain SK11).